A 158-amino-acid chain; its full sequence is 3-hydroxyacyl-[acyl-carrier-protein] dehydratase FabZ (158 aa).

The active site involves H62.

Belongs to the thioester dehydratase family. FabZ subfamily.

The protein resides in the cytoplasm. The catalysed reaction is a (3R)-hydroxyacyl-[ACP] = a (2E)-enoyl-[ACP] + H2O. In terms of biological role, involved in unsaturated fatty acids biosynthesis. Catalyzes the dehydration of short chain beta-hydroxyacyl-ACPs and long chain saturated and unsaturated beta-hydroxyacyl-ACPs. The protein is 3-hydroxyacyl-[acyl-carrier-protein] dehydratase FabZ of Novosphingobium aromaticivorans (strain ATCC 700278 / DSM 12444 / CCUG 56034 / CIP 105152 / NBRC 16084 / F199).